The sequence spans 198 residues: Probable GTP-binding protein EngB (198 aa).

The EngB-type G domain occupies 22–195 (DLPEIALAGR…WKAIHKMTKT (174 aa)). GTP is bound by residues 30-37 (GRSNVGKS), 57-61 (GKTQT), 75-78 (DVPG), 142-145 (TKAD), and 174-176 (FSS). Positions 37 and 59 each coordinate Mg(2+).

The protein belongs to the TRAFAC class TrmE-Era-EngA-EngB-Septin-like GTPase superfamily. EngB GTPase family. Requires Mg(2+) as cofactor.

Its function is as follows. Necessary for normal cell division and for the maintenance of normal septation. This Bacillus cereus (strain G9842) protein is Probable GTP-binding protein EngB.